Reading from the N-terminus, the 233-residue chain is Phytol kinase (233 aa).

The next 6 membrane-spanning stretches (helical) occupy residues 9–29, 56–76, 96–118, 122–144, 172–192, and 213–233; these read MALP…AVVL, VVLI…AGVF, VGRH…GGFF, LPIF…ALVG, FLVT…VLVV, and NLTV…LWLG.

This sequence belongs to the polyprenol kinase family.

It localises to the cell membrane. The enzyme catalyses phytol + CTP = phytyl phosphate + CDP + H(+). The protein operates within cofactor biosynthesis; tocopherol biosynthesis. Functionally, catalyzes the CTP-dependent phosphorylation of phytol to phytylmonophosphate (PMP). Can also use UTP as an alternative phosphate donor, but not ATP or GTP. Is involved in tocopherol biosynthesis, via the utilization of phytol generated by chlorophyll degradation. Also plays a significant but not critical role in the recycling of phytol for the biosynthesis of new chlorophyll molecules. This chain is Phytol kinase, found in Synechocystis sp. (strain ATCC 27184 / PCC 6803 / Kazusa).